Consider the following 312-residue polypeptide: Magnesium protoporphyrin IX methyltransferase, chloroplastic (312 aa).

The N-terminal 39 residues, 1-39 (MPFAPSLLSSSSSVSQFLPRFPNATRFNVTPRSRAATVV), are a transit peptide targeting the chloroplast.

Belongs to the class I-like SAM-binding methyltransferase superfamily. Magnesium protoporphyrin O-methyltransferase family.

Its subcellular location is the plastid. The protein localises to the chloroplast membrane. The protein resides in the chloroplast thylakoid membrane. The catalysed reaction is Mg-protoporphyrin IX + S-adenosyl-L-methionine = Mg-protoporphyrin IX 13-monomethyl ester + S-adenosyl-L-homocysteine. Its pathway is porphyrin-containing compound metabolism; chlorophyll biosynthesis. Regulated by the folate status via an increased concentration of S-adenosyl-homocysteine (AdoHcy), a potent inhibitor of most AdoMet-dependent methyltransferases. Converts Mg-protoporphyrin IX to Mg-protoporphyrin IX methylester using S-adenosyl-L-methionine as a cofactor. Involved in chloroplast-to-nucleus signaling by acting as a negative effector of nuclear photosynthetic gene expression. The polypeptide is Magnesium protoporphyrin IX methyltransferase, chloroplastic (CHLM) (Arabidopsis thaliana (Mouse-ear cress)).